We begin with the raw amino-acid sequence, 487 residues long: Serine/threonine-protein kinase 4 (487 aa).

Residue Met1 is modified to N-acetylmethionine. Phosphothreonine is present on Thr3. The Protein kinase domain occupies 30–281; the sequence is FDVLEKLGEG…ATQLLQHPFV (252 aa). ATP contacts are provided by residues 36–44 and Lys59; that span reads LGEGSYGSV. Residue Asp149 is the Proton acceptor of the active site. Phosphothreonine; by autocatalysis is present on Thr183. Phosphoserine is present on Ser265. A coiled-coil region spans residues 290-310; the sequence is LRDLINEAMDVKLKRQESQQR. The span at 303–312 shows a compositional bias: basic and acidic residues; it reads KRQESQQREV. The segment at 303–332 is disordered; it reads KRQESQQREVDQDDEENSEEDEMDSGTMVR. Positions 313-326 are enriched in acidic residues; the sequence is DQDDEENSEEDEMD. Position 320 is a phosphoserine (Ser320). 2 positions are modified to phosphothreonine: Thr340 and Thr367. The residue at position 387 (Thr387) is a Phosphothreonine; by PKB/AKT1. Ser410 and Ser414 each carry phosphoserine. Tyr433 carries the phosphotyrosine modification. An SARAH domain is found at 433–480; that stretch reads YEFLKSWTVEDLQKRLLALDPMMEQEIEEIRQKYQSKRQPILDAIEAK.

Belongs to the protein kinase superfamily. STE Ser/Thr protein kinase family. STE20 subfamily. As to quaternary structure, homodimer; mediated via the coiled-coil region. Interacts with NORE1, which inhibits autoactivation. Interacts with and stabilizes SAV1. Interacts with RASSF1. Interacts with FOXO3. Interacts with RASSF2 (via SARAH domain). Interacts with AR, PKB/AKT1, TNNI3 and SIRT1. Interacts with DLG5 (via PDZ domain 3). Interacts with MARK3 and SCRIB in the presence of DLG5. Mg(2+) serves as cofactor. Autophosphorylated on serine and threonine residues. Phosphorylation at Thr-387 by PKB/AKT1, leads to inhibition of its: kinase activity, nuclear translocation and autophosphorylation at Thr-183. It also diminishes its cleavage by caspases and its ability to phosphorylate FOXO3. Post-translationally, proteolytically cleaved by caspase-3 during apoptosis at Asp-326 and Asp-349 resulting in a 37 kDa or a 39 kDa subunit respectively. The 39 kDa subunit is further cleaved into the 37 kDa form. Proteolytic cleavage results in kinase activation and nuclear translocation of the truncated form (MST1/N). It is less likely that cleavage at Asp-349 is a prerequisite for activation as this site is not conserved in the murine ortholog.

Its subcellular location is the cytoplasm. It is found in the nucleus. It carries out the reaction L-seryl-[protein] + ATP = O-phospho-L-seryl-[protein] + ADP + H(+). The enzyme catalyses L-threonyl-[protein] + ATP = O-phospho-L-threonyl-[protein] + ADP + H(+). Inhibited by the C-terminal non-catalytic region. Activated by caspase-cleavage. Full activation also requires homodimerization and autophosphorylation of Thr-183. Activated by RASSF1 which acts by preventing its dephosphorylation. In terms of biological role, stress-activated, pro-apoptotic kinase which, following caspase-cleavage, enters the nucleus and induces chromatin condensation followed by internucleosomal DNA fragmentation. Key component of the Hippo signaling pathway which plays a pivotal role in organ size control and tumor suppression by restricting proliferation and promoting apoptosis. The core of this pathway is composed of a kinase cascade wherein STK3/MST2 and STK4/MST1, in complex with its regulatory protein SAV1, phosphorylates and activates LATS1/2 in complex with its regulatory protein MOB1, which in turn phosphorylates and inactivates YAP1 oncoprotein and WWTR1/TAZ. Phosphorylation of YAP1 by LATS2 inhibits its translocation into the nucleus to regulate cellular genes important for cell proliferation, cell death, and cell migration. STK3/MST2 and STK4/MST1 are required to repress proliferation of mature hepatocytes, to prevent activation of facultative adult liver stem cells (oval cells), and to inhibit tumor formation. Phosphorylates 'Ser-14' of histone H2B (H2BS14ph) during apoptosis. Phosphorylates FOXO3 upon oxidative stress, which results in its nuclear translocation and cell death initiation. Phosphorylates MOBKL1A, MOBKL1B and RASSF2. Phosphorylates TNNI3 (cardiac Tn-I) and alters its binding affinity to TNNC1 (cardiac Tn-C) and TNNT2 (cardiac Tn-T). Phosphorylates FOXO1 on 'Ser-212' and regulates its activation and stimulates transcription of PMAIP1 in a FOXO1-dependent manner. Phosphorylates SIRT1 and inhibits SIRT1-mediated p53/TP53 deacetylation, thereby promoting p53/TP53 dependent transcription and apoptosis upon DNA damage. Acts as an inhibitor of PKB/AKT1. Phosphorylates AR on 'Ser-650' and suppresses its activity by intersecting with PKB/AKT1 signaling and antagonizing formation of AR-chromatin complexes. This Macaca mulatta (Rhesus macaque) protein is Serine/threonine-protein kinase 4 (STK4).